Reading from the N-terminus, the 246-residue chain is 4'-phosphopantetheinyl transferase Svp (246 aa).

Residues 223-232 (AGTAEESAEG) are compositionally biased toward low complexity. The segment at 223 to 246 (AGTAEESAEGAGKEATADDRTAVP) is disordered. The segment covering 233–246 (AGKEATADDRTAVP) has biased composition (basic and acidic residues).

Belongs to the P-Pant transferase superfamily. Gsp/Sfp/HetI/AcpT family.

It catalyses the reaction apo-[ACP] + CoA = holo-[ACP] + adenosine 3',5'-bisphosphate + H(+). In terms of biological role, transfers the 4'-phosphopantetheine moiety from coenzyme A to a Ser of an acyl-carrier-protein. The enzyme is able to transfer the cofactor to a broad range of enzymes with acyl- or peptidyl-carrier protein domains. This Streptomyces mobaraensis (Streptoverticillium mobaraense) protein is 4'-phosphopantetheinyl transferase Svp (svp).